The chain runs to 100 residues: uncharacterized protein (100 aa).

This sequence belongs to the csb family.

This is an uncharacterized protein from Dictyostelium discoideum (Social amoeba).